Here is a 130-residue protein sequence, read N- to C-terminus: Small ribosomal subunit protein uS9 (130 aa).

The tract at residues Lys99 to Arg130 is disordered. Basic residues predominate over residues Lys111–Arg130.

It belongs to the universal ribosomal protein uS9 family.

This is Small ribosomal subunit protein uS9 from Latilactobacillus sakei subsp. sakei (strain 23K) (Lactobacillus sakei subsp. sakei).